Consider the following 640-residue polypeptide: Ribonuclease J (640 aa).

Zn(2+) contacts are provided by His75, His77, Asp79, His80, His145, and Asp167. 368–372 (HVSGH) contributes to the substrate binding site. His394 is a Zn(2+) binding site. Positions 578–640 (TVSATSATPA…RKRSTTSVSS (63 aa)) are disordered. Positions 598-610 (PEPKVKAKPEKKV) are enriched in basic and acidic residues.

It belongs to the metallo-beta-lactamase superfamily. RNA-metabolizing metallo-beta-lactamase-like family. Bacterial RNase J subfamily. In terms of assembly, homodimer, may be a subunit of the RNA degradosome. The cofactor is Zn(2+).

It localises to the cytoplasm. Functionally, an RNase that has 5'-3' exonuclease and possibly endoonuclease activity. Involved in maturation of rRNA and in some organisms also mRNA maturation and/or decay. The sequence is that of Ribonuclease J from Synechocystis sp. (strain ATCC 27184 / PCC 6803 / Kazusa).